Reading from the N-terminus, the 743-residue chain is Elongation factor 2 (743 aa).

One can recognise a tr-type G domain in the interval 19-265; that stretch reads NNIRNIGIIA…MVVRHLPSPK (247 aa). Residues 28–35, 94–98, and 148–151 each bind GTP; these read AHIHHGKT, DTPGH, and NKVD. The residue at position 615 (histidine 615) is a Diphthamide.

It belongs to the TRAFAC class translation factor GTPase superfamily. Classic translation factor GTPase family. EF-G/EF-2 subfamily.

The protein resides in the cytoplasm. Catalyzes the GTP-dependent ribosomal translocation step during translation elongation. During this step, the ribosome changes from the pre-translocational (PRE) to the post-translocational (POST) state as the newly formed A-site-bound peptidyl-tRNA and P-site-bound deacylated tRNA move to the P and E sites, respectively. Catalyzes the coordinated movement of the two tRNA molecules, the mRNA and conformational changes in the ribosome. The sequence is that of Elongation factor 2 from Nanoarchaeum equitans (strain Kin4-M).